Here is a 231-residue protein sequence, read N- to C-terminus: DNA mismatch repair protein MutH (231 aa).

This sequence belongs to the MutH family.

It is found in the cytoplasm. Its function is as follows. Sequence-specific endonuclease that cleaves unmethylated GATC sequences. It is involved in DNA mismatch repair. In Shewanella woodyi (strain ATCC 51908 / MS32), this protein is DNA mismatch repair protein MutH.